We begin with the raw amino-acid sequence, 374 residues long: Phospho-2-dehydro-3-deoxyheptonate aldolase AMT16 (374 aa).

It belongs to the class-I DAHP synthase family.

The enzyme catalyses D-erythrose 4-phosphate + phosphoenolpyruvate + H2O = 7-phospho-2-dehydro-3-deoxy-D-arabino-heptonate + phosphate. Its pathway is mycotoxin biosynthesis. In terms of biological role, nonribosomal peptide synthetase; part of the gene clusters that mediate the biosynthesis of AM-toxins, host-selective toxins (HSTs) causing Alternaria blotch on apple, a worldwide distributed disease. AM-toxins are cyclic depsipeptides containing the 3 residues 2-hydroxy-isovaleric acid (2-HIV), dehydroalanine, L-alanine which are common for all 3 AM-toxins I to III. The fourth precursor is L-alpha-amino-methoxyphenyl-valeric acid (L-Amv) for AM-toxin I, L-alpha-amino-phenyl-valeric acid (L-Apv) for AM-toxin II, and L-alpha-amino-hydroxyphenyl-valeric acid (L-Ahv) for AM-toxin III. AM-toxins have two target sites for affecting susceptible apple cells; they cause invagination of the plasma membrane and electrolyte loss and chloroplast disorganization. The non-ribosomal peptide synthetase AMT1 contains 4 catalytic modules and is responsible for activation of each residue in AM-toxin. The aldo-keto reductase AMT2 catalyzes the conversion of 2-keto-isovaleric acid (2-KIV) to 2-hydroxy-isovaleric acid (2-HIV), one of the precursor residues incorporated by AMT1 during AM-toxin biosynthesis, by reduction of its ketone to an alcohol. The cytochrome P450 monooxygenase AMT3 and the thioesterase AMT4 are also important for AM-toxin production, but their exact function within the AM-toxin biosynthesis are not known yet. Up to 21 proteins (including AMT1 to AMT4) are predicted to be involved in AM-toxin biosynthesis since their expression ishighly up-regulated in AM-toxin-producing cultures. The chain is Phospho-2-dehydro-3-deoxyheptonate aldolase AMT16 from Alternaria alternata (Alternaria rot fungus).